Here is a 494-residue protein sequence, read N- to C-terminus: Amidophosphoribosyltransferase (494 aa).

A propeptide spanning residues 1-10 (MFNYSGLNEE) is cleaved from the precursor. The active-site Nucleophile is the C11. The Glutamine amidotransferase type-2 domain occupies 11–231 (CGVFGIWNHP…AGEYVVINDK (221 aa)). Mg(2+) is bound by residues S294, D356, and D357.

The protein in the C-terminal section; belongs to the purine/pyrimidine phosphoribosyltransferase family. Requires Mg(2+) as cofactor.

It carries out the reaction 5-phospho-beta-D-ribosylamine + L-glutamate + diphosphate = 5-phospho-alpha-D-ribose 1-diphosphate + L-glutamine + H2O. It participates in purine metabolism; IMP biosynthesis via de novo pathway; N(1)-(5-phospho-D-ribosyl)glycinamide from 5-phospho-alpha-D-ribose 1-diphosphate: step 1/2. Catalyzes the formation of phosphoribosylamine from phosphoribosylpyrophosphate (PRPP) and glutamine. This Staphylococcus aureus (strain COL) protein is Amidophosphoribosyltransferase.